Here is a 196-residue protein sequence, read N- to C-terminus: ATP-dependent Clp protease proteolytic subunit (196 aa).

Serine 101 serves as the catalytic Nucleophile. Histidine 126 is an active-site residue.

This sequence belongs to the peptidase S14 family. As to quaternary structure, component of the chloroplastic Clp protease core complex.

Its subcellular location is the plastid. It is found in the chloroplast stroma. It catalyses the reaction Hydrolysis of proteins to small peptides in the presence of ATP and magnesium. alpha-casein is the usual test substrate. In the absence of ATP, only oligopeptides shorter than five residues are hydrolyzed (such as succinyl-Leu-Tyr-|-NHMec, and Leu-Tyr-Leu-|-Tyr-Trp, in which cleavage of the -Tyr-|-Leu- and -Tyr-|-Trp bonds also occurs).. Its function is as follows. Cleaves peptides in various proteins in a process that requires ATP hydrolysis. Has a chymotrypsin-like activity. Plays a major role in the degradation of misfolded proteins. This chain is ATP-dependent Clp protease proteolytic subunit, found in Barbarea verna (Land cress).